The sequence spans 242 residues: Proteasome subunit alpha (242 aa).

This sequence belongs to the peptidase T1A family. The 20S proteasome core is composed of 14 alpha and 14 beta subunits that assemble into four stacked heptameric rings, resulting in a barrel-shaped structure. The two inner rings, each composed of seven catalytic beta subunits, are sandwiched by two outer rings, each composed of seven alpha subunits. The catalytic chamber with the active sites is on the inside of the barrel. Has a gated structure, the ends of the cylinder being occluded by the N-termini of the alpha-subunits. Is capped at one or both ends by the proteasome regulatory ATPase, PAN.

It localises to the cytoplasm. With respect to regulation, the formation of the proteasomal ATPase PAN-20S proteasome complex, via the docking of the C-termini of PAN into the intersubunit pockets in the alpha-rings, triggers opening of the gate for substrate entry. Interconversion between the open-gate and close-gate conformations leads to a dynamic regulation of the 20S proteasome proteolysis activity. Functionally, component of the proteasome core, a large protease complex with broad specificity involved in protein degradation. This is Proteasome subunit alpha from Sulfurisphaera tokodaii (strain DSM 16993 / JCM 10545 / NBRC 100140 / 7) (Sulfolobus tokodaii).